The chain runs to 327 residues: UPF0285 protein Maeo_0978 (327 aa).

This sequence belongs to the UPF0285 family.

This Methanococcus aeolicus (strain ATCC BAA-1280 / DSM 17508 / OCM 812 / Nankai-3) protein is UPF0285 protein Maeo_0978.